The chain runs to 236 residues: RNA-binding protein 24 (236 aa).

The region spanning 11–88 (TKIFVGGLPY…RKANVNLAYL (78 aa)) is the RRM domain. Residues 175–199 (QYPYAASPAAAGYVTAGGYGYAVQQ) are necessary for interaction with EIF4E.

In terms of assembly, interacts with EIF4E; this interaction prevents EIF4E from binding to p53/TP53 mRNA and inhibits the assembly of translation initiation complex. (Microbial infection) Interacts with HCV mature core protein; this interaction, which enhances the interaction of Core with 5'-UTR may favor viral replication over translation. As to quaternary structure, (Microbial infection) Interacts with HCV Serine protease/helicase NS3. As to expression, expressed in fetal and adult heart and skeletal muscles.

The protein resides in the nucleus. Its subcellular location is the cytoplasm. Its function is as follows. Multifunctional RNA-binding protein involved in the regulation of pre-mRNA splicing, mRNA stability and mRNA translation important for cell fate decision and differentiation. Plays a major role in pre-mRNA alternative splicing regulation. Mediates preferentially muscle-specific exon inclusion in numerous mRNAs important for striated cardiac and skeletal muscle cell differentiation. Binds to intronic splicing enhancer (ISE) composed of stretches of GU-rich motifs localized in flanking intron of exon that will be included by alternative splicing. Involved in embryonic stem cell (ESC) transition to cardiac cell differentiation by promoting pre-mRNA alternative splicing events of several pluripotency and/or differentiation genes. Plays a role in the regulation of mRNA stability. Binds to 3'-untranslated region (UTR) AU-rich elements in target transcripts, such as CDKN1A and MYOG, leading to maintain their stabilities. Involved in myogenic differentiation by regulating MYOG levels. Binds to multiple regions in the mRNA 3'-UTR of TP63 isoform 2, hence inducing its destabilization. Also promotes the destabilization of the CHRM2 mRNA via its binding to a region in the coding sequence. Plays a role in the regulation of mRNA translation. Mediates repression of p53/TP53 mRNA translation through its binding to U-rich element in the 3'-UTR, hence preventing EIF4E from binding to p53/TP53 mRNA and translation initiation. Binds to a huge amount of mRNAs. Required for embryonic heart development, sarcomer and M-band formation in striated muscles. Together with RBM20, promotes the expression of short isoforms of PDLIM5/ENH in cardiomyocytes. (Microbial infection) Promotes hepatitis C virus (HCV) replication over translation through the inhibition of viral protein expression. Decreases viral translation by linking viral 5'- and 3'-UTRs, blocking 80S ribosome assembly on the viral IRES and enhancing the interaction of the mature core protein and 5'-UTR. This chain is RNA-binding protein 24, found in Homo sapiens (Human).